The chain runs to 241 residues: Endodeoxyribonuclease NucC (241 aa).

Residues D73, E104, and K106 contribute to the active site. D73 and E104 together coordinate Mg(2+).

Belongs to the NucC endonuclease family. Self-oligomerizes. Forms homotrimers; in the presence of cAAA the trimers associate face-to-face to form homohexamers. The 2 cAAA-binding sites are on the exterior of the hexamer at the three-way junction, there are maximally 2 cyclic nucleotides per hexamer. The cofactor is Mg(2+).

With respect to regulation, activated by cAAA and to a lesser extent cAA; both cyclic nucleotides are products of its cognate CD-NTase. Cyclic nucleotide binding causes hexamerization. Functionally, effector DNase of a CBASS antivirus system. CBASS (cyclic oligonucleotide-based antiphage signaling system) provides immunity against bacteriophage. The CD-NTase protein synthesizes cyclic nucleotides in response to infection; these serve as specific second messenger signals. The signals activate a diverse range of effectors, leading to bacterial cell death and thus abortive phage infection. A type III-C(AAA) CBASS system. Its function is as follows. A cyclic nucleotide-activated dsDNase. In the presence of 3',3',3'-cyclic AMP-AMP-AMP (cAAA) and to a lesser extent cyclic-di-AMP (c-di-AMP), endonucleolytically degrades dsDNA. Binds one cAAA in a pocket on one surface of the trimer; cAAA binding promotes hexamerization which is probably necessary for nuclease activation. The nuclease digests dsDNA to about 50 bp lengths. DNA has been modeled to contact a pair of juxtaposed active sites (one from each layer of the hexamer), accounting for cleavage on both strands. The sequence is that of Endodeoxyribonuclease NucC from Pseudomonas aeruginosa.